We begin with the raw amino-acid sequence, 103 residues long: Zinc-containing ferredoxin (103 aa).

Residues 1 to 36 (GIDPNYRTSKPVVGDHSGHKIYGPVESPKVLGVHGT) are N-terminal extension. Position 19 (His-19) interacts with Zn(2+). Lys-29 is subject to N6-methyllysine. His-34 is a binding site for Zn(2+). 4Fe-4S ferredoxin-type domains are found at residues 35–65 (GTIV…WYET) and 74–103 (KADP…VKPP). Residues Cys-45 and Cys-51 each contribute to the [3Fe-4S] cluster site. Cys-55 is a [4Fe-4S] cluster binding site. Asp-76 serves as a coordination point for Zn(2+). Residues Cys-83, Cys-86, and Cys-89 each contribute to the [4Fe-4S] cluster site. A [3Fe-4S] cluster-binding site is contributed by Cys-93.

[3Fe-4S] cluster is required as a cofactor. The cofactor is [4Fe-4S] cluster. Requires Zn(2+) as cofactor.

Functionally, ferredoxins are iron-sulfur proteins that transfer electrons in a wide variety of metabolic reactions. The chain is Zinc-containing ferredoxin (zfx) from Sulfolobus acidocaldarius (strain ATCC 33909 / DSM 639 / JCM 8929 / NBRC 15157 / NCIMB 11770).